The primary structure comprises 416 residues: Gamma-glutamyl phosphate reductase (416 aa).

It belongs to the gamma-glutamyl phosphate reductase family.

The protein resides in the cytoplasm. The catalysed reaction is L-glutamate 5-semialdehyde + phosphate + NADP(+) = L-glutamyl 5-phosphate + NADPH + H(+). The protein operates within amino-acid biosynthesis; L-proline biosynthesis; L-glutamate 5-semialdehyde from L-glutamate: step 2/2. Its function is as follows. Catalyzes the NADPH-dependent reduction of L-glutamate 5-phosphate into L-glutamate 5-semialdehyde and phosphate. The product spontaneously undergoes cyclization to form 1-pyrroline-5-carboxylate. This Streptococcus thermophilus (strain ATCC BAA-491 / LMD-9) protein is Gamma-glutamyl phosphate reductase.